A 194-amino-acid polypeptide reads, in one-letter code: Ubiquitin-conjugating enzyme E2 T (194 aa).

A UBC core domain is found at 2–152 (QRVSRLKREM…AKKWTAEHAI (151 aa)). The active-site Glycyl thioester intermediate is C86. Basic and acidic residues-rich tracts occupy residues 158 to 170 (CVET…ENKN) and 185 to 194 (NLEHTKKVCL). The tract at residues 158–194 (CVETDGKTPENKNLKTSHKREALSAQENLEHTKKVCL) is disordered.

It belongs to the ubiquitin-conjugating enzyme family.

It localises to the nucleus. It catalyses the reaction S-ubiquitinyl-[E1 ubiquitin-activating enzyme]-L-cysteine + [E2 ubiquitin-conjugating enzyme]-L-cysteine = [E1 ubiquitin-activating enzyme]-L-cysteine + S-ubiquitinyl-[E2 ubiquitin-conjugating enzyme]-L-cysteine.. It functions in the pathway protein modification; protein ubiquitination. In terms of biological role, accepts ubiquitin from the E1 complex and catalyzes its covalent attachment to other proteins. Catalyzes monoubiquitination. Involved in DNA repair. The sequence is that of Ubiquitin-conjugating enzyme E2 T (ube2t) from Danio rerio (Zebrafish).